The chain runs to 104 residues: Ig lambda-1 chain C region (104 aa).

Positions 6–99 constitute an Ig-like domain; sequence PSVTLFPPSS…EENTVEKSLS (94 aa). Cysteine 27 and cysteine 85 are joined by a disulfide.

The sequence is that of Ig lambda-1 chain C region from Rattus norvegicus (Rat).